The chain runs to 208 residues: Small ribosomal subunit protein uS4 (208 aa).

The interval 30-51 (KSSLEKRPYAPGQHGQRRSKIS) is disordered. In terms of domain architecture, S4 RNA-binding spans 98 to 161 (RRLDNVVYRM…KNNPQVQRSI (64 aa)).

Belongs to the universal ribosomal protein uS4 family. Part of the 30S ribosomal subunit. Contacts protein S5. The interaction surface between S4 and S5 is involved in control of translational fidelity.

One of the primary rRNA binding proteins, it binds directly to 16S rRNA where it nucleates assembly of the body of the 30S subunit. In terms of biological role, with S5 and S12 plays an important role in translational accuracy. The polypeptide is Small ribosomal subunit protein uS4 (Wolinella succinogenes (strain ATCC 29543 / DSM 1740 / CCUG 13145 / JCM 31913 / LMG 7466 / NCTC 11488 / FDC 602W) (Vibrio succinogenes)).